The sequence spans 367 residues: Protein NDRG4-B (367 aa).

The span at 1–12 shows a compositional bias: basic and acidic residues; sequence MSELRFPEEKPL. 2 disordered regions span residues 1 to 21 and 333 to 367; these read MSEL…TEME and LTSA…EVSC. Residues 347 to 367 show a composition bias toward polar residues; sequence CTQSESSDGIGQINHTMEVSC.

This sequence belongs to the NDRG family.

The protein resides in the cytoplasm. The protein localises to the cytosol. In terms of biological role, contributes to the maintenance of intracerebral BDNF levels within the normal range. May enhance growth factor-induced ERK1 and ERK2 phosphorylation. May attenuate growth factor-promoted ELK1 phosphorylation in a microtubule-dependent manner. This is Protein NDRG4-B (ndrg4-b) from Xenopus laevis (African clawed frog).